Consider the following 226-residue polypeptide: HTH-type transcriptional regulator TcmR (226 aa).

Polar residues predominate over residues 1 to 16; sequence MDSAETDTPSTRSTPN. A disordered region spans residues 1-25; the sequence is MDSAETDTPSTRSTPNGPGLRQRKL. Residues 26–86 form the HTH tetR-type domain; it reads RRTRDQLIRE…TPISAIDEAF (61 aa). A DNA-binding region (H-T-H motif) is located at residues 49–68; it reads TVEQIAEAVEVHPRTFFRHF.

Its pathway is antibiotic biosynthesis; tetracenomycin C biosynthesis. Functionally, represses transcription of the divergently oriented tcmR and tcmA (tetracenomycin C resistance and export) genes by binding to an intergenic operator region. This binding is inhibited by tetracenomycin C. The sequence is that of HTH-type transcriptional regulator TcmR (tcmR) from Streptomyces glaucescens.